The sequence spans 684 residues: uncharacterized protein (684 aa).

Disordered regions lie at residues 267-353 (MGAR…TCTD) and 388-449 (SVAS…AERE). The span at 316–326 (GMTSAKASTSY) shows a compositional bias: polar residues. The segment covering 438-449 (RPTEARRRAERE) has biased composition (basic and acidic residues).

This is an uncharacterized protein from Colorado tick fever virus (strain USA/Florio N-7180) (CTFV).